The primary structure comprises 119 residues: Protein FAM24A-like (119 aa).

The N-terminal stretch at 1 to 40 (MYKPFDLRTIITIIIGCGILTAMFLLIGLVLCLYSKISKA) is a signal peptide.

Belongs to the FAM24 family.

It localises to the secreted. In Mus musculus (Mouse), this protein is Protein FAM24A-like.